A 968-amino-acid chain; its full sequence is RNA polymerase-associated protein RapA (968 aa).

Residues Glu163–Asp332 form the Helicase ATP-binding domain. Asp176–Thr183 is an ATP binding site. The short motif at Asp278–His281 is the DEAH box element. The Helicase C-terminal domain occupies Arg491–Leu655.

The protein belongs to the SNF2/RAD54 helicase family. RapA subfamily. As to quaternary structure, interacts with the RNAP. Has a higher affinity for the core RNAP than for the holoenzyme. Its ATPase activity is stimulated by binding to RNAP.

Transcription regulator that activates transcription by stimulating RNA polymerase (RNAP) recycling in case of stress conditions such as supercoiled DNA or high salt concentrations. Probably acts by releasing the RNAP, when it is trapped or immobilized on tightly supercoiled DNA. Does not activate transcription on linear DNA. Probably not involved in DNA repair. The sequence is that of RNA polymerase-associated protein RapA from Shewanella frigidimarina (strain NCIMB 400).